We begin with the raw amino-acid sequence, 289 residues long: Phosphatidylglycerol--prolipoprotein diacylglyceryl transferase (289 aa).

The next 7 helical transmembrane spans lie at 23-43 (ALHW…WLAV), 61-81 (LLYM…VLFY), 99-119 (GGMS…WFAH), 125-145 (FFQV…AGRL), 199-219 (SQLY…NLFI), 226-246 (GSVS…TEFF), and 259-279 (LFSM…LMMV). Residue R144 coordinates a 1,2-diacyl-sn-glycero-3-phospho-(1'-sn-glycerol).

The protein belongs to the Lgt family.

It localises to the cell inner membrane. The enzyme catalyses L-cysteinyl-[prolipoprotein] + a 1,2-diacyl-sn-glycero-3-phospho-(1'-sn-glycerol) = an S-1,2-diacyl-sn-glyceryl-L-cysteinyl-[prolipoprotein] + sn-glycerol 1-phosphate + H(+). It functions in the pathway protein modification; lipoprotein biosynthesis (diacylglyceryl transfer). Its function is as follows. Catalyzes the transfer of the diacylglyceryl group from phosphatidylglycerol to the sulfhydryl group of the N-terminal cysteine of a prolipoprotein, the first step in the formation of mature lipoproteins. The chain is Phosphatidylglycerol--prolipoprotein diacylglyceryl transferase from Pectobacterium carotovorum subsp. carotovorum (strain PC1).